A 360-amino-acid polypeptide reads, in one-letter code: Phospho-N-acetylmuramoyl-pentapeptide-transferase (360 aa).

The next 10 helical transmembrane spans lie at 26 to 46 (AIVSLLTALFISLWMGPRMIA), 72 to 92 (PTMGGIMILTAIVVSVLLWAY), 94 to 114 (SNPYVWCVLVVLVGYGIIGFV), 132 to 152 (WKYFWMSVIALGVAFALYLAG), 168 to 188 (VMPQLGLFYVLLAYFVIVGTG), 199 to 219 (GLAIMPTVFVAAGFALVAWAT), 236 to 256 (AGELVIVCTAIVGAGLGFLWF), 263 to 283 (VFMGDVGSLALGGALGIIAVL), 288 to 308 (FLLVIMGGVFVVETLSVILQV), and 338 to 358 (VIVRFWIISLMLVLIGLATLK).

The protein belongs to the glycosyltransferase 4 family. MraY subfamily. Mg(2+) is required as a cofactor.

Its subcellular location is the cell inner membrane. It carries out the reaction UDP-N-acetyl-alpha-D-muramoyl-L-alanyl-gamma-D-glutamyl-meso-2,6-diaminopimeloyl-D-alanyl-D-alanine + di-trans,octa-cis-undecaprenyl phosphate = di-trans,octa-cis-undecaprenyl diphospho-N-acetyl-alpha-D-muramoyl-L-alanyl-D-glutamyl-meso-2,6-diaminopimeloyl-D-alanyl-D-alanine + UMP. Its pathway is cell wall biogenesis; peptidoglycan biosynthesis. Its function is as follows. Catalyzes the initial step of the lipid cycle reactions in the biosynthesis of the cell wall peptidoglycan: transfers peptidoglycan precursor phospho-MurNAc-pentapeptide from UDP-MurNAc-pentapeptide onto the lipid carrier undecaprenyl phosphate, yielding undecaprenyl-pyrophosphoryl-MurNAc-pentapeptide, known as lipid I. This chain is Phospho-N-acetylmuramoyl-pentapeptide-transferase, found in Citrobacter koseri (strain ATCC BAA-895 / CDC 4225-83 / SGSC4696).